Reading from the N-terminus, the 460-residue chain is Cysteine--tRNA ligase (460 aa).

C28 contacts Zn(2+). Positions 30 to 40 (MTVYDYCHLGH) match the 'HIGH' region motif. Residues C209, H234, and E238 each contribute to the Zn(2+) site. The 'KMSKS' region signature appears at 266-270 (KMSKS). Residue K269 coordinates ATP.

It belongs to the class-I aminoacyl-tRNA synthetase family. Monomer. Zn(2+) serves as cofactor.

It localises to the cytoplasm. It carries out the reaction tRNA(Cys) + L-cysteine + ATP = L-cysteinyl-tRNA(Cys) + AMP + diphosphate. The protein is Cysteine--tRNA ligase of Pseudomonas syringae pv. syringae (strain B728a).